The sequence spans 394 residues: Phosphoglycerate kinase (394 aa).

Residues 21–23, Arg36, 59–62, Arg118, and Arg151 each bind substrate; these read DFN and HLGR. Phosphoserine is present on Ser183. ATP contacts are provided by Lys201 and Gly292. The residue at position 299 (Thr299) is a Phosphothreonine. ATP is bound by residues Glu323 and 350–353; that span reads GGDS.

This sequence belongs to the phosphoglycerate kinase family. In terms of assembly, monomer.

The protein localises to the cytoplasm. It carries out the reaction (2R)-3-phosphoglycerate + ATP = (2R)-3-phospho-glyceroyl phosphate + ADP. The protein operates within carbohydrate degradation; glycolysis; pyruvate from D-glyceraldehyde 3-phosphate: step 2/5. The sequence is that of Phosphoglycerate kinase (pgk) from Priestia megaterium (strain DSM 319 / IMG 1521) (Bacillus megaterium).